The chain runs to 426 residues: Enolase (426 aa).

Gln163 is a binding site for (2R)-2-phosphoglycerate. The Proton donor role is filled by Glu205. The Mg(2+) site is built by Asp242, Glu283, and Asp310. Lys335, Arg364, Ser365, and Lys386 together coordinate (2R)-2-phosphoglycerate. Lys335 functions as the Proton acceptor in the catalytic mechanism.

This sequence belongs to the enolase family. The cofactor is Mg(2+).

It is found in the cytoplasm. The protein resides in the secreted. The protein localises to the cell surface. The enzyme catalyses (2R)-2-phosphoglycerate = phosphoenolpyruvate + H2O. It participates in carbohydrate degradation; glycolysis; pyruvate from D-glyceraldehyde 3-phosphate: step 4/5. Catalyzes the reversible conversion of 2-phosphoglycerate (2-PG) into phosphoenolpyruvate (PEP). It is essential for the degradation of carbohydrates via glycolysis. In Pseudarthrobacter chlorophenolicus (strain ATCC 700700 / DSM 12829 / CIP 107037 / JCM 12360 / KCTC 9906 / NCIMB 13794 / A6) (Arthrobacter chlorophenolicus), this protein is Enolase.